The following is a 312-amino-acid chain: Pantothenate kinase (312 aa).

97 to 104 (GSVAVGKS) is an ATP binding site.

This sequence belongs to the prokaryotic pantothenate kinase family.

Its subcellular location is the cytoplasm. The enzyme catalyses (R)-pantothenate + ATP = (R)-4'-phosphopantothenate + ADP + H(+). Its pathway is cofactor biosynthesis; coenzyme A biosynthesis; CoA from (R)-pantothenate: step 1/5. This is Pantothenate kinase from Mycolicibacterium smegmatis (strain ATCC 700084 / mc(2)155) (Mycobacterium smegmatis).